The sequence spans 1041 residues: Beta-galactosidase (1041 aa).

Positions 103 and 201 each coordinate substrate. Asp-201 is a Na(+) binding site. Mg(2+)-binding residues include Glu-415, His-417, and Glu-460. Substrate contacts are provided by residues Glu-460 and 536–539; that span reads EYAH. Glu-460 functions as the Proton donor in the catalytic mechanism. The active-site Nucleophile is Glu-536. Asn-596 contacts Mg(2+). Na(+) is bound by residues Phe-600 and Asn-603. Positions 603 and 1016 each coordinate substrate.

It belongs to the glycosyl hydrolase 2 family. As to quaternary structure, homotetramer. Mg(2+) serves as cofactor. The cofactor is Na(+).

It catalyses the reaction Hydrolysis of terminal non-reducing beta-D-galactose residues in beta-D-galactosides.. The polypeptide is Beta-galactosidase (Alteromonas mediterranea (strain DSM 17117 / CIP 110805 / LMG 28347 / Deep ecotype)).